Here is a 106-residue protein sequence, read N- to C-terminus: L-rhamnose mutarotase (106 aa).

Tyr-20 contributes to the substrate binding site. The active-site Proton donor is His-24. Substrate contacts are provided by residues Tyr-43 and 78–79 (WW).

This sequence belongs to the rhamnose mutarotase family. In terms of assembly, homodimer.

The protein localises to the cytoplasm. The enzyme catalyses alpha-L-rhamnose = beta-L-rhamnose. It functions in the pathway carbohydrate metabolism; L-rhamnose metabolism. In terms of biological role, involved in the anomeric conversion of L-rhamnose. The sequence is that of L-rhamnose mutarotase from Brucella anthropi (strain ATCC 49188 / DSM 6882 / CCUG 24695 / JCM 21032 / LMG 3331 / NBRC 15819 / NCTC 12168 / Alc 37) (Ochrobactrum anthropi).